A 241-amino-acid polypeptide reads, in one-letter code: Thiamine import ATP-binding protein ThiQ (241 aa).

Positions 2 to 239 (IQLDKLNHCY…PKDEVLIQYL (238 aa)) constitute an ABC transporter domain. 41–48 (GPSGAGKS) provides a ligand contact to ATP.

This sequence belongs to the ABC transporter superfamily. Thiamine importer (TC 3.A.1.19.1) family. In terms of assembly, the complex is composed of two ATP-binding proteins (ThiQ), two transmembrane proteins (ThiP) and a solute-binding protein (ThiB).

It localises to the cell inner membrane. The enzyme catalyses thiamine(out) + ATP + H2O = thiamine(in) + ADP + phosphate + H(+). In terms of biological role, part of the ABC transporter complex ThiBPQ involved in thiamine import. Responsible for energy coupling to the transport system. This Photobacterium profundum (strain SS9) protein is Thiamine import ATP-binding protein ThiQ.